A 760-amino-acid chain; its full sequence is Colleterpenol synthase (760 aa).

Residues 14 to 335 (ASSGLRSKFR…YTRRYPSKAD (322 aa)) form a terpene cyclase region. D95 provides a ligand contact to Mg(2+). Residues 95–99 (DDYYD) carry the DDXXD 1 motif. Residues 233 to 241 (NDLYSWPKE) carry the NSE/DTE motif. A prenyltransferase region spans residues 336 to 759 (LRQPEVEFVD…LELVLRRLWI (424 aa)). Residues 359–400 (EEKVVSESVESLPTTEVEDEFSSSDASPGSVDQAISTPPSTT) are disordered. Positions 391–400 (QAISTPPSTT) are enriched in polar residues. Isopentenyl diphosphate is bound by residues K477, R480, and H509. Mg(2+) contacts are provided by D516 and D520. Residues 516–520 (DDIED) carry the DDXXD 2 motif. R525 serves as a coordination point for dimethylallyl diphosphate. An isopentenyl diphosphate-binding site is contributed by R526. Positions 605, 606, 643, 650, 660, and 670 each coordinate dimethylallyl diphosphate.

The protein in the N-terminal section; belongs to the terpene synthase family. It in the C-terminal section; belongs to the FPP/GGPP synthase family. In terms of assembly, hexamer. Requires Mg(2+) as cofactor.

It catalyses the reaction 5 isopentenyl diphosphate + dimethylallyl diphosphate = all-trans-hexaprenyl diphosphate + 5 diphosphate. The enzyme catalyses all-trans-hexaprenyl diphosphate + H2O = colleterpenol + diphosphate. Bifunctional terpene synthase that converts dimethylallyl diphosphate (DMAPP) and isopentenyl diphosphate (IPP) into colleterpenol as a single product. The C-terminal prenyltransferase (PT) domain of CgCS catalyzes formation of hexaprenyl diphosphate (HexPP), whereas the N-terminal terpene cyclase (TC) domain catalyzes the cyclization of HexPP to colleterpenol. The protein is Colleterpenol synthase of Colletotrichum gloeosporioides (Anthracnose fungus).